Here is a 306-residue protein sequence, read N- to C-terminus: MRHFLTLNDFSKAEILEILSLADKIKKETKNKKYEPYLKNQTLAMIFEKSSTRTRVSFETGIYQLGGQGLFLSSRDIQLGRGEPIKDTARVISSMVDMAMLRVYKQSDLVEFAKFSSVPVINGLSDDLHPVQLMADYMTIKEIANGETIAYIGDGNNMSNSWLMLASILGLELHIATPKGYEPNKNFINIAKENAKISGAKILLTHNPKEAIEGANVVATDTWISMGQEDEKERKVKDFESFCVNKNLMSLACKDAILLHCLPAYRGYEVSDKVFESHARDIFLEAENRLHAQKGIMVWLDAHRND.

Carbamoyl phosphate contacts are provided by residues 51–54 (STRT), glutamine 78, arginine 102, and 129–132 (HPVQ). Residues asparagine 157, aspartate 221, and 225–226 (SM) each bind L-ornithine. Residues 261–262 (CL) and arginine 289 contribute to the carbamoyl phosphate site.

Belongs to the aspartate/ornithine carbamoyltransferase superfamily. OTCase family.

It is found in the cytoplasm. The catalysed reaction is carbamoyl phosphate + L-ornithine = L-citrulline + phosphate + H(+). Its pathway is amino-acid biosynthesis; L-arginine biosynthesis; L-arginine from L-ornithine and carbamoyl phosphate: step 1/3. Its function is as follows. Reversibly catalyzes the transfer of the carbamoyl group from carbamoyl phosphate (CP) to the N(epsilon) atom of ornithine (ORN) to produce L-citrulline. The polypeptide is Ornithine carbamoyltransferase (Campylobacter hominis (strain ATCC BAA-381 / DSM 21671 / CCUG 45161 / LMG 19568 / NCTC 13146 / CH001A)).